A 193-amino-acid chain; its full sequence is Ancillary SecYEG translocon subunit (193 aa).

Residues 1-8 are Cytoplasmic-facing; that stretch reads MLNISKKN. Residues 9–29 traverse the membrane as a helical segment; it reads IIFFILFFLIISLILFNWKYF. Residues 30 to 193 are Periplasmic-facing; it reads SLVNKENLES…MKLNELKEQN (164 aa).

The protein belongs to the YfgM family. As to quaternary structure, interacts with the SecYEG translocon. Forms a complex with PpiD.

Its subcellular location is the cell inner membrane. Its function is as follows. May mediate protein transfer from the SecYEG translocon to the periplasmic chaperone network via its periplasmic C-terminal region. This is Ancillary SecYEG translocon subunit from Buchnera aphidicola subsp. Acyrthosiphon pisum (strain APS) (Acyrthosiphon pisum symbiotic bacterium).